Reading from the N-terminus, the 354-residue chain is Methylthioribose-1-phosphate isomerase (354 aa).

Residues 58-60, arginine 101, and glutamine 204 contribute to the substrate site; that span reads RGA. Aspartate 245 acts as the Proton donor in catalysis. Residue 255–256 coordinates substrate; the sequence is NK.

It belongs to the eIF-2B alpha/beta/delta subunits family. MtnA subfamily.

It carries out the reaction 5-(methylsulfanyl)-alpha-D-ribose 1-phosphate = 5-(methylsulfanyl)-D-ribulose 1-phosphate. It functions in the pathway amino-acid biosynthesis; L-methionine biosynthesis via salvage pathway; L-methionine from S-methyl-5-thio-alpha-D-ribose 1-phosphate: step 1/6. In terms of biological role, catalyzes the interconversion of methylthioribose-1-phosphate (MTR-1-P) into methylthioribulose-1-phosphate (MTRu-1-P). The polypeptide is Methylthioribose-1-phosphate isomerase (Xylella fastidiosa (strain M12)).